Reading from the N-terminus, the 252-residue chain is Aquaporin TIP4-4 (252 aa).

The next 2 helical transmembrane spans lie at 20-40 (AVLAELILTFLFVFAGVGSAM) and 53-73 (VVGLTAVALAHTLVVAVMVSA). Positions 83–85 (NPA) match the NPA 1 motif. 3 helical membrane-spanning segments follow: residues 105–125 (VAAQLLGSTLACLLLAFLAVA), 143–163 (GVLMEAVLTFSLLFAVYATVV), and 168–188 (AVGGMGPLLVGLVVGANVLAG). Positions 197–199 (NPA) match the NPA 2 motif. A helical transmembrane segment spans residues 216–236 (VYWVGPLIGGPLAGLVYDGLF).

The protein belongs to the MIP/aquaporin (TC 1.A.8) family. TIP (TC 1.A.8.10) subfamily.

It is found in the vacuole membrane. Functionally, aquaporins facilitate the transport of water and small neutral solutes across cell membranes. This Zea mays (Maize) protein is Aquaporin TIP4-4 (TIP4-4).